The following is a 332-amino-acid chain: Ribose-phosphate pyrophosphokinase (332 aa).

Residues 43–45 (DGE) and 102–103 (RQ) each bind ATP. Residues His136 and Asp176 each coordinate Mg(2+). Residue Lys199 is part of the active site. Residues Arg201, Asp225, and 229–233 (DTGGT) each bind D-ribose 5-phosphate.

It belongs to the ribose-phosphate pyrophosphokinase family. Class I subfamily. Homohexamer. Mg(2+) serves as cofactor.

Its subcellular location is the cytoplasm. It carries out the reaction D-ribose 5-phosphate + ATP = 5-phospho-alpha-D-ribose 1-diphosphate + AMP + H(+). The protein operates within metabolic intermediate biosynthesis; 5-phospho-alpha-D-ribose 1-diphosphate biosynthesis; 5-phospho-alpha-D-ribose 1-diphosphate from D-ribose 5-phosphate (route I): step 1/1. Involved in the biosynthesis of the central metabolite phospho-alpha-D-ribosyl-1-pyrophosphate (PRPP) via the transfer of pyrophosphoryl group from ATP to 1-hydroxyl of ribose-5-phosphate (Rib-5-P). This chain is Ribose-phosphate pyrophosphokinase, found in Mycoplasma genitalium (strain ATCC 33530 / DSM 19775 / NCTC 10195 / G37) (Mycoplasmoides genitalium).